The following is a 628-amino-acid chain: Putative lipase ATG15 (628 aa).

The Cytoplasmic segment spans residues 1 to 32; it reads MLAAEKRRLLHKTRPVSASEKPGSIYPQRALY. A helical; Signal-anchor for type II membrane protein transmembrane segment spans residues 33–53; sequence LLVCFSIATISLGYLHFIGAI. Over 54–628 the chain is Lumenal; sequence DIGRFGISSV…GYDGDVDDDQ (575 aa). N261, N299, and N383 each carry an N-linked (GlcNAc...) asparagine glycan. The active-site Charge relay system is the S401. Residue N518 is glycosylated (N-linked (GlcNAc...) asparagine). Positions 540-605 are disordered; sequence HDDDVPDEPE…ISEPSESPKK (66 aa). Residues 562–586 show a composition bias toward low complexity; sequence PSSSTSDGKNNRISSTATTTISPTS. Residues 591–600 show a composition bias toward polar residues; it reads PTSSDISEPS.

The protein belongs to the AB hydrolase superfamily. Lipase family. As to quaternary structure, binds to both phosphatidylinositol (PI) and phosphatidylinositol 3,5-bisphosphate (PIP2).

It localises to the endosome. It is found in the multivesicular body membrane. The protein localises to the prevacuolar compartment membrane. The catalysed reaction is a triacylglycerol + H2O = a diacylglycerol + a fatty acid + H(+). In terms of biological role, lipase which is essential for lysis of subvacuolar cytoplasm to vacuole targeted bodies and intravacuolar autophagic bodies. Involved in the lysis of intravacuolar multivesicular body (MVB) vesicles. The intravacuolar membrane disintegration by ATG15 is critical to life span extension. This chain is Putative lipase ATG15 (ATG15), found in Scheffersomyces stipitis (strain ATCC 58785 / CBS 6054 / NBRC 10063 / NRRL Y-11545) (Yeast).